A 375-amino-acid polypeptide reads, in one-letter code: Anhydro-N-acetylmuramic acid kinase (375 aa).

12 to 19 (GTSLDGVD) is a binding site for ATP.

The protein belongs to the anhydro-N-acetylmuramic acid kinase family.

It catalyses the reaction 1,6-anhydro-N-acetyl-beta-muramate + ATP + H2O = N-acetyl-D-muramate 6-phosphate + ADP + H(+). The protein operates within amino-sugar metabolism; 1,6-anhydro-N-acetylmuramate degradation. Its pathway is cell wall biogenesis; peptidoglycan recycling. In terms of biological role, catalyzes the specific phosphorylation of 1,6-anhydro-N-acetylmuramic acid (anhMurNAc) with the simultaneous cleavage of the 1,6-anhydro ring, generating MurNAc-6-P. Is required for the utilization of anhMurNAc either imported from the medium or derived from its own cell wall murein, and thus plays a role in cell wall recycling. The polypeptide is Anhydro-N-acetylmuramic acid kinase (Variovorax paradoxus (strain S110)).